The sequence spans 85 residues: UPF0297 protein LBA0418 (85 aa).

This sequence belongs to the UPF0297 family.

This Lactobacillus acidophilus (strain ATCC 700396 / NCK56 / N2 / NCFM) protein is UPF0297 protein LBA0418.